The chain runs to 217 residues: ATP-binding protein BexA (217 aa).

The ABC transporter domain occupies 2–217 (IRVNNVCKKY…AYQYYNETQK (216 aa)). ATP is bound at residue 38 to 45 (GRNGAGKS).

The protein belongs to the ABC transporter superfamily.

The protein localises to the cell inner membrane. In terms of biological role, putative ATP-binding protein, and an energy-coupling component of capsule polysaccharide export apparatus. The sequence is that of ATP-binding protein BexA (bexA) from Haemophilus influenzae.